Here is a 273-residue protein sequence, read N- to C-terminus: Chaperone protein PsaB (273 aa).

Residues 1-31 (MKNLFFSAYKKVFSYITSIVIFMVSLPYAYS) form the signal peptide. A disulfide bridge connects residues C128 and C163.

It belongs to the periplasmic pilus chaperone family.

The protein resides in the periplasm. Its function is as follows. Required for the biogenesis of the pH 6 antigen. This is Chaperone protein PsaB (psaB) from Yersinia pestis.